The following is a 391-amino-acid chain: DNA repair protein NreB (391 aa).

A C4-type zinc finger spans residues 3 to 17; it reads CIECRGRMLCSRKVC. The short motif at 384–391 is the PIP motif element; the sequence is QRTLWEFM.

Belongs to the Nre family. Interacts with the DNA polymerase sliding clamp (PCNA) via the PIP (PCNA-interacting peptide) motif.

In terms of biological role, involved in DNA damage repair. This is DNA repair protein NreB from Archaeoglobus fulgidus (strain ATCC 49558 / DSM 4304 / JCM 9628 / NBRC 100126 / VC-16).